Consider the following 259-residue polypeptide: MSFIVIIPARYESSRLLGKPLMDIQGKPMVEWTWMQAKKSGATRVVIATESDRVKAVCESFGAEVCLTSERHESGTERIAEVASLLGLNDDDILVNVQGDEPLLPPDLIHQVAEGLETHPNTLMATLCEPILDVETVFDPHAVKVIRDCNNYALNFTRAPMPWSRDTFGSEPKTLPGNWPYRRHIGLYAYRSGFVKRYVEWPVCALEQVEKLEQLRVLWHGEKILVLDALCEAGVGVDTEQDLIKVRKIMANLNPDGAL.

It belongs to the KdsB family.

The protein resides in the cytoplasm. The enzyme catalyses 3-deoxy-alpha-D-manno-oct-2-ulosonate + CTP = CMP-3-deoxy-beta-D-manno-octulosonate + diphosphate. Its pathway is nucleotide-sugar biosynthesis; CMP-3-deoxy-D-manno-octulosonate biosynthesis; CMP-3-deoxy-D-manno-octulosonate from 3-deoxy-D-manno-octulosonate and CTP: step 1/1. The protein operates within bacterial outer membrane biogenesis; lipopolysaccharide biosynthesis. Functionally, activates KDO (a required 8-carbon sugar) for incorporation into bacterial lipopolysaccharide in Gram-negative bacteria. This Hydrogenovibrio crunogenus (strain DSM 25203 / XCL-2) (Thiomicrospira crunogena) protein is 3-deoxy-manno-octulosonate cytidylyltransferase 1.